The sequence spans 625 residues: Basic helix-loop-helix ARNT-like protein 1 (625 aa).

Positions Met-1 to Arg-60 are disordered. Position 17 is a phosphoserine; by GSK3-beta (Ser-17). The segment covering Ser-17–Gly-32 has biased composition (low complexity). Phosphothreonine; by GSK3-beta is present on Thr-21. Residues Asn-36–Gly-41 carry the Nuclear localization signal motif. A compositionally biased stretch (basic and acidic residues) spans Asp-51–Arg-60. The bHLH domain maps to Asn-72 to Leu-125. At Ser-78 the chain carries Phosphoserine. A Phosphoserine; by CK2 modification is found at Ser-90. The Nuclear export signal 1 motif lies at Leu-142–Leu-152. A PAS 1 domain is found at Ser-143 to Pro-215. Lys-252 is covalently cross-linked (Glycyl lysine isopeptide (Lys-Gly) (interchain with G-Cter in SUMO2 and SUMO3)). Lys-259 is covalently cross-linked (Glycyl lysine isopeptide (Lys-Gly) (interchain with G-Cter in SUMO); alternate). Lys-259 participates in a covalent cross-link: Glycyl lysine isopeptide (Lys-Gly) (interchain with G-Cter in SUMO2); alternate. Residues Pro-325–Arg-395 form the PAS 2 domain. Residues Leu-360–Leu-368 carry the Nuclear export signal 2 motif. Residues Thr-400–Asn-443 form the PAC domain. Disordered regions lie at residues Gln-454–Ala-491 and Gly-510–Asn-594. The segment at Arg-507–Gln-587 is interaction with CIART. Positions Gly-510 to Pro-520 are enriched in low complexity. Lys-537 carries the post-translational modification N6-acetyllysine.

Component of the circadian clock oscillator which includes the CRY1/2 proteins, CLOCK or NPAS2, BMAL1 or BMAL2, CSNK1D and/or CSNK1E, TIMELESS and the PER1/2/3 proteins. Forms a heterodimer with CLOCK. The CLOCK-BMAL1 heterodimer is required for E-box-dependent transactivation, for CLOCK nuclear translocation and degradation, and, for phosphorylation of both CLOCK and BMAL1. Part of a nuclear complex which also includes RACK1 and PRKCA; RACK1 and PRKCA are recruited to the complex in a circadian manner. Interacts with NPAS2. Interacts with EZH2. Interacts with SUMO3. Interacts with SIRT1. Interacts with AHR. Interacts with ID1, ID2 and ID3. Interacts with DDX4. Interacts with OGT. Interacts with EED and SUZ12. Interacts with MTA1. Interacts with CIART. Interacts with HSP90. Interacts with KAT2B and EP300. Interacts with BHLHE40/DEC1 and BHLHE41/DEC2. Interacts with RELB and the interaction is enhanced in the presence of CLOCK. Interacts with PER1, PER2, CRY1 and CRY2 and this interaction requires a translocation to the nucleus. Interaction of the CLOCK-BMAL1 heterodimer with PER or CRY inhibits transcription activation. Interaction of the CLOCK-BMAL1 with CRY1 is independent of DNA but with PER2 is off DNA. The CLOCK-BMAL1 heterodimer interacts with GSK3B. Interacts with KDM5A. Interacts with KMT2A; in a circadian manner. Interacts with UBE3A. Interacts with PRKCG. Interacts with MAGEL2. Interacts with NCOA2. Interacts with THRAP3. The CLOCK-BMAL1 heterodimer interacts with PASD1. Interacts with PASD1. Interacts with USP9X. Interacts with PIWIL2 (via PIWI domain). Interacts with HDAC3. Interacts with HNF4A. Ubiquitinated, leading to its proteasomal degradation. Deubiquitinated by USP9X. In terms of processing, O-glycosylated; contains O-GlcNAc. O-glycosylation by OGT prevents protein degradation by inhibiting ubiquitination. It also stabilizes the CLOCK-BMAL1 heterodimer thereby increasing CLOCK-BMAL1-mediated transcription of genes in the negative loop of the circadian clock such as PER1/2/3 and CRY1/2. Post-translationally, acetylated on Lys-537 by CLOCK during the repression phase of the circadian cycle. Acetylation facilitates recruitment of CRY1 protein and initiates the repression phase of the circadian cycle. Acetylated at Lys-537 by KAT5 during the activation phase of the cycle, leading to recruitment of the positive transcription elongation factor b (P-TEFb) and BRD4, followed by productive elongation of circadian transcripts. Deacetylated by SIRT1, which may result in decreased protein stability. Phosphorylated upon dimerization with CLOCK. Phosphorylation enhances the transcriptional activity, alters the subcellular localization and decreases the stability of the CLOCK-BMAL1 heterodimer by promoting its degradation. Phosphorylation shows circadian variations in the liver with a peak between CT10 to CT14. Phosphorylation at Ser-90 by CK2 is essential for its nuclear localization, its interaction with CLOCK and controls CLOCK nuclear entry. Dephosphorylation at Ser-78 is important for dimerization with CLOCK and transcriptional activity. In terms of processing, sumoylated on Lys-259 upon dimerization with CLOCK. Predominantly conjugated to poly-SUMO2/3 rather than SUMO1 and the level of these conjugates undergo rhythmic variation, peaking at CT9-CT12. Sumoylation localizes it exclusively to the PML body and promotes its ubiquitination in the PML body, ubiquitin-dependent proteasomal degradation and the transcriptional activity of the CLOCK-BMAL1 heterodimer. Post-translationally, undergoes lysosome-mediated degradation in a time-dependent manner in the liver.

The protein resides in the nucleus. Its subcellular location is the cytoplasm. It localises to the PML body. Transcriptional activator which forms a core component of the circadian clock. The circadian clock, an internal time-keeping system, regulates various physiological processes through the generation of approximately 24 hour circadian rhythms in gene expression, which are translated into rhythms in metabolism and behavior. It is derived from the Latin roots 'circa' (about) and 'diem' (day) and acts as an important regulator of a wide array of physiological functions including metabolism, sleep, body temperature, blood pressure, endocrine, immune, cardiovascular, and renal function. Consists of two major components: the central clock, residing in the suprachiasmatic nucleus (SCN) of the brain, and the peripheral clocks that are present in nearly every tissue and organ system. Both the central and peripheral clocks can be reset by environmental cues, also known as Zeitgebers (German for 'timegivers'). The predominant Zeitgeber for the central clock is light, which is sensed by retina and signals directly to the SCN. The central clock entrains the peripheral clocks through neuronal and hormonal signals, body temperature and feeding-related cues, aligning all clocks with the external light/dark cycle. Circadian rhythms allow an organism to achieve temporal homeostasis with its environment at the molecular level by regulating gene expression to create a peak of protein expression once every 24 hours to control when a particular physiological process is most active with respect to the solar day. Transcription and translation of core clock components (CLOCK, NPAS2, BMAL1, BMAL2, PER1, PER2, PER3, CRY1 and CRY2) plays a critical role in rhythm generation, whereas delays imposed by post-translational modifications (PTMs) are important for determining the period (tau) of the rhythms (tau refers to the period of a rhythm and is the length, in time, of one complete cycle). A diurnal rhythm is synchronized with the day/night cycle, while the ultradian and infradian rhythms have a period shorter and longer than 24 hours, respectively. Disruptions in the circadian rhythms contribute to the pathology of cardiovascular diseases, cancer, metabolic syndromes and aging. A transcription/translation feedback loop (TTFL) forms the core of the molecular circadian clock mechanism. Transcription factors, CLOCK or NPAS2 and BMAL1 or BMAL2, form the positive limb of the feedback loop, act in the form of a heterodimer and activate the transcription of core clock genes and clock-controlled genes (involved in key metabolic processes), harboring E-box elements (5'-CACGTG-3') within their promoters. The core clock genes: PER1/2/3 and CRY1/2 which are transcriptional repressors form the negative limb of the feedback loop and interact with the CLOCK|NPAS2-BMAL1|BMAL2 heterodimer inhibiting its activity and thereby negatively regulating their own expression. This heterodimer also activates nuclear receptors NR1D1/2 and RORA/B/G, which form a second feedback loop and which activate and repress BMAL1 transcription, respectively. BMAL1 positively regulates myogenesis and negatively regulates adipogenesis via the transcriptional control of the genes of the canonical Wnt signaling pathway. Plays a role in normal pancreatic beta-cell function; regulates glucose-stimulated insulin secretion via the regulation of antioxidant genes NFE2L2/NRF2 and its targets SESN2, PRDX3, CCLC and CCLM. Negatively regulates the mTORC1 signaling pathway; regulates the expression of MTOR and DEPTOR. Controls diurnal oscillations of Ly6C inflammatory monocytes; rhythmic recruitment of the PRC2 complex imparts diurnal variation to chemokine expression that is necessary to sustain Ly6C monocyte rhythms. Regulates the expression of HSD3B2, STAR, PTGS2, CYP11A1, CYP19A1 and LHCGR in the ovary and also the genes involved in hair growth. Plays an important role in adult hippocampal neurogenesis by regulating the timely entry of neural stem/progenitor cells (NSPCs) into the cell cycle and the number of cell divisions that take place prior to cell-cycle exit. Regulates the circadian expression of CIART and KLF11. The CLOCK-BMAL1 heterodimer regulates the circadian expression of SERPINE1/PAI1, VWF, B3, CCRN4L/NOC, NAMPT, DBP, MYOD1, PPARGC1A, PPARGC1B, SIRT1, GYS2, F7, NGFR, GNRHR, BHLHE40/DEC1, ATF4, MTA1, KLF10 and also genes implicated in glucose and lipid metabolism. Promotes rhythmic chromatin opening, regulating the DNA accessibility of other transcription factors. The NPAS2-BMAL1 heterodimer positively regulates the expression of MAOA, F7 and LDHA and modulates the circadian rhythm of daytime contrast sensitivity by regulating the rhythmic expression of adenylate cyclase type 1 (ADCY1) in the retina. The preferred binding motif for the CLOCK-BMAL1 heterodimer is 5'-CACGTGA-3', which contains a flanking adenine nucleotide at the 3-prime end of the canonical 6-nucleotide E-box sequence. CLOCK specifically binds to the half-site 5'-CAC-3', while BMAL1 binds to the half-site 5'-GTGA-3'. The CLOCK-BMAL1 heterodimer also recognizes the non-canonical E-box motifs 5'-AACGTGA-3' and 5'-CATGTGA-3'. Essential for the rhythmic interaction of CLOCK with ASS1 and plays a critical role in positively regulating CLOCK-mediated acetylation of ASS1. Plays a role in protecting against lethal sepsis by limiting the expression of immune checkpoint protein CD274 in macrophages in a PKM2-dependent manner. Regulates the diurnal rhythms of skeletal muscle metabolism via transcriptional activation of genes promoting triglyceride synthesis (DGAT2) and metabolic efficiency (COQ10B). The polypeptide is Basic helix-loop-helix ARNT-like protein 1 (BMAL1) (Pongo abelii (Sumatran orangutan)).